Here is a 354-residue protein sequence, read N- to C-terminus: Ribosomal RNA large subunit methyltransferase M (354 aa).

S-adenosyl-L-methionine-binding positions include Ser-183, 216–219, Asp-235, Asp-255, and Asp-271; that span reads SPGG. Lys-300 functions as the Proton acceptor in the catalytic mechanism.

The protein belongs to the class I-like SAM-binding methyltransferase superfamily. RNA methyltransferase RlmE family. RlmM subfamily. Monomer.

It is found in the cytoplasm. It carries out the reaction cytidine(2498) in 23S rRNA + S-adenosyl-L-methionine = 2'-O-methylcytidine(2498) in 23S rRNA + S-adenosyl-L-homocysteine + H(+). Its function is as follows. Catalyzes the 2'-O-methylation at nucleotide C2498 in 23S rRNA. This chain is Ribosomal RNA large subunit methyltransferase M, found in Pseudomonas putida (strain GB-1).